The sequence spans 747 residues: ESX-1 secretion system protein EccCa1 (747 aa).

The next 3 membrane-spanning stretches (helical) occupy residues 41–61, 65–85, and 222–242; these read ILPY…VAGG, LSPY…GGLA, and FPTI…TAMI. The FtsK domain occupies 456-665; sequence GNVMYLDIKE…LRTTSSHESK (210 aa). An ATP-binding site is contributed by 479 to 486; it reads GTTGSGKS.

In terms of assembly, part of the ESX-1 / type VII secretion system (T7SS), which is composed of cytosolic and membrane components. The ESX-1 membrane complex is composed of EccB1, EccCa1, EccCb1, EccD1 and EccE1.

The protein localises to the cell inner membrane. Functionally, part of the ESX-1 specialized secretion system, which delivers several virulence factors to host cells during infection, including the key virulence factors EsxA (ESAT-6) and EsxB (CFP-10). In Mycobacterium tuberculosis (strain CDC 1551 / Oshkosh), this protein is ESX-1 secretion system protein EccCa1.